An 843-amino-acid polypeptide reads, in one-letter code: Transmembrane protease serine 7 (843 aa).

Residues 1-76 are Cytoplasmic-facing; sequence MDKENSDVSA…KVPFWNVQNK (76 aa). Residues 27-67 form a disordered region; the sequence is AQKKLPVRRPPLPGRRLPLPGRRPPQRPIGKAKPKKQSKKK. A compositionally biased stretch (basic residues) spans 56 to 67; it reads GKAKPKKQSKKK. A helical; Signal-anchor for type II membrane protein transmembrane segment spans residues 77 to 97; that stretch reads IILFTVFLFILAVIAWTLLWL. Over 98-843 the chain is Extracellular; that stretch reads YISKTESKDA…WIHKYVPSLL (746 aa). An SEA domain is found at 106–234; the sequence is DAFYFAGMFR…DSVVLNAGLR (129 aa). Intrachain disulfides connect C247–C273, C299–C322, C365–C396, C484–C496, C491–C509, C503–C518, C525–C544, C538–C553, C559–C571, C566–C585, C579–C594, and C631–C647. CUB domains lie at 247 to 360 and 365 to 481; these read CSQY…FEVI and CENT…YNIS. LDL-receptor class A domains are found at residues 483–519, 517–554, and 558–595; these read PCPV…LFCV, FCVS…QNCT, and PCNN…EGCT. Residues 606–840 enclose the Peptidase S1 domain; that stretch reads IIGGTDTLEG…FVPWIHKYVP (235 aa). Active-site charge relay system residues include H646 and D694. Intrachain disulfides connect C730/C796 and C762/C775. Catalysis depends on S790, which acts as the Charge relay system.

It belongs to the peptidase S1 family. As to quaternary structure, forms a heterodimer with SERPINA5. In terms of processing, N-glycosylated. As to expression, expressed in brain, ovary, testis, salivary gland, trachea and lung.

The protein resides in the cell membrane. Functionally, serine protease which preferentially hydrolyzes peptides with Arg at the P1 position. This is Transmembrane protease serine 7 (TMPRSS7) from Homo sapiens (Human).